The following is a 220-amino-acid chain: Protein-L-isoaspartate O-methyltransferase (220 aa).

S70 is an active-site residue.

It belongs to the methyltransferase superfamily. L-isoaspartyl/D-aspartyl protein methyltransferase family.

It localises to the cytoplasm. It catalyses the reaction [protein]-L-isoaspartate + S-adenosyl-L-methionine = [protein]-L-isoaspartate alpha-methyl ester + S-adenosyl-L-homocysteine. In terms of biological role, catalyzes the methyl esterification of L-isoaspartyl residues in peptides and proteins that result from spontaneous decomposition of normal L-aspartyl and L-asparaginyl residues. It plays a role in the repair and/or degradation of damaged proteins. This Halorhodospira halophila (strain DSM 244 / SL1) (Ectothiorhodospira halophila (strain DSM 244 / SL1)) protein is Protein-L-isoaspartate O-methyltransferase.